The chain runs to 392 residues: WD repeat-containing protein GTS1 (392 aa).

4 WD repeats span residues 81–124, 128–167, 171–211, and 323–368; these read GHSD…QVSR, GNDQ…QVAC, SHMD…NDDD, and GHID…TEIN.

In terms of tissue distribution, expressed in germinating seeds, rosettes leaves, flowers and siliques.

Functionally, involved in the control of plant growth development. Acts as negative regulator of seed germination, cell division in meristematic regions, plant growth and overall biomass accumulation. May function by regulating ribosome activities and biogenesis in plant cells. This Arabidopsis thaliana (Mouse-ear cress) protein is WD repeat-containing protein GTS1.